A 554-amino-acid polypeptide reads, in one-letter code: Valerianol synthase TPS1F (554 aa).

Mg(2+)-binding residues include D307 and D311. Residues 326–330 (VQRWD) carry the DDXXD motif motif. Residues D452, S456, and E460 each coordinate Mg(2+).

Belongs to the terpene synthase family. The cofactor is Mg(2+).

It catalyses the reaction (2E,6E)-farnesyl diphosphate + H2O = valerianol + diphosphate. Its pathway is secondary metabolite biosynthesis; terpenoid biosynthesis. In terms of biological role, terpene synthase that catalyzes the biosynthesis of the terpene valerianol, which is a volatile compound of floral scent. The polypeptide is Valerianol synthase TPS1F (Camellia hiemalis (Camellia)).